The sequence spans 361 residues: S-adenosylmethionine:tRNA ribosyltransferase-isomerase (361 aa).

This sequence belongs to the QueA family. In terms of assembly, monomer.

Its subcellular location is the cytoplasm. It catalyses the reaction 7-aminomethyl-7-carbaguanosine(34) in tRNA + S-adenosyl-L-methionine = epoxyqueuosine(34) in tRNA + adenine + L-methionine + 2 H(+). The protein operates within tRNA modification; tRNA-queuosine biosynthesis. In terms of biological role, transfers and isomerizes the ribose moiety from AdoMet to the 7-aminomethyl group of 7-deazaguanine (preQ1-tRNA) to give epoxyqueuosine (oQ-tRNA). The chain is S-adenosylmethionine:tRNA ribosyltransferase-isomerase from Actinobacillus pleuropneumoniae serotype 3 (strain JL03).